A 333-amino-acid chain; its full sequence is Low specificity L-threonine aldolase (333 aa).

N6-(pyridoxal phosphate)lysine is present on K197.

This sequence belongs to the threonine aldolase family. As to quaternary structure, homotetramer. The cofactor is pyridoxal 5'-phosphate.

The enzyme catalyses L-threonine = acetaldehyde + glycine. It carries out the reaction L-allo-threonine = acetaldehyde + glycine. Catalyzes the cleavage of L-allo-threonine and L-threonine to glycine and acetaldehyde. L-threo-phenylserine and L-erythro-phenylserine are also good substrates. In Escherichia coli O157:H7, this protein is Low specificity L-threonine aldolase (ltaE).